A 111-amino-acid polypeptide reads, in one-letter code: Universal stress protein B (111 aa).

The next 2 membrane-spanning stretches (helical) occupy residues 1-21 and 90-110; these read MIST…NMAR and FILT…LLIW.

Belongs to the universal stress protein B family.

The protein resides in the cell inner membrane. This chain is Universal stress protein B, found in Enterobacter sp. (strain 638).